The chain runs to 375 residues: Cobalt-precorrin-5B C(1)-methyltransferase (375 aa).

Belongs to the CbiD family.

It catalyses the reaction Co-precorrin-5B + S-adenosyl-L-methionine = Co-precorrin-6A + S-adenosyl-L-homocysteine. Its pathway is cofactor biosynthesis; adenosylcobalamin biosynthesis; cob(II)yrinate a,c-diamide from sirohydrochlorin (anaerobic route): step 6/10. Catalyzes the methylation of C-1 in cobalt-precorrin-5B to form cobalt-precorrin-6A. The polypeptide is Cobalt-precorrin-5B C(1)-methyltransferase (Fusobacterium nucleatum subsp. nucleatum (strain ATCC 25586 / DSM 15643 / BCRC 10681 / CIP 101130 / JCM 8532 / KCTC 2640 / LMG 13131 / VPI 4355)).